Consider the following 433-residue polypeptide: Ribulose bisphosphate carboxylase/oxygenase activase, chloroplastic (433 aa).

The segment covering 1-20 (MAAAFSSTVGAPASTPTRSS) has biased composition (polar residues). The transit peptide at 1–53 (MAAAFSSTVGAPASTPTRSSFLGKKLNKPQVSAAVTYHGKSSSSNSRFKAMAA) directs the protein to the chloroplast. The segment at 1–60 (MAAAFSSTVGAPASTPTRSSFLGKKLNKPQVSAAVTYHGKSSSSNSRFKAMAAKEVDETK) is disordered. An ATP-binding site is contributed by 161–168 (GGKGQGKS).

This sequence belongs to the RuBisCO activase family.

It is found in the plastid. It localises to the chloroplast stroma. Its function is as follows. Activation of RuBisCO (ribulose-1,5-bisphosphate carboxylase/oxygenase; EC 4.1.1.39) involves the ATP-dependent carboxylation of the epsilon-amino group of lysine leading to a carbamate structure. The chain is Ribulose bisphosphate carboxylase/oxygenase activase, chloroplastic (RCA1) from Zea mays (Maize).